The sequence spans 170 residues: Ribosome maturation factor RimM (170 aa).

In terms of domain architecture, PRC barrel spans 96 to 169 (EGEFYACDVE…VVQLATLEGL (74 aa)).

Belongs to the RimM family. In terms of assembly, binds ribosomal protein uS19.

The protein localises to the cytoplasm. An accessory protein needed during the final step in the assembly of 30S ribosomal subunit, possibly for assembly of the head region. Essential for efficient processing of 16S rRNA. May be needed both before and after RbfA during the maturation of 16S rRNA. It has affinity for free ribosomal 30S subunits but not for 70S ribosomes. The polypeptide is Ribosome maturation factor RimM (Sorangium cellulosum (strain So ce56) (Polyangium cellulosum (strain So ce56))).